We begin with the raw amino-acid sequence, 205 residues long: Small ribosomal subunit protein uS4 (205 aa).

Residues 1 to 12 (MSKRIQAKHKLD) are compositionally biased toward basic residues. Residues 1–49 (MSKRIQAKHKLDRRMGQNIWGRPKSPVNRREYGPGQHGQRRKGKLSDFG) form a disordered region. Residues 94 to 156 (RRLDAVIYRA…SKQLEIVVVA (63 aa)) form the S4 RNA-binding domain.

Belongs to the universal ribosomal protein uS4 family. As to quaternary structure, part of the 30S ribosomal subunit. Contacts protein S5. The interaction surface between S4 and S5 is involved in control of translational fidelity.

One of the primary rRNA binding proteins, it binds directly to 16S rRNA where it nucleates assembly of the body of the 30S subunit. Its function is as follows. With S5 and S12 plays an important role in translational accuracy. In Methylobacterium nodulans (strain LMG 21967 / CNCM I-2342 / ORS 2060), this protein is Small ribosomal subunit protein uS4.